A 334-amino-acid polypeptide reads, in one-letter code: Glucosyltransferase 3 (334 aa).

Residues threonine 16, arginine 179, and 249 to 254 (SHKSAT) contribute to the UDP site.

It belongs to the Gtf3 glucosyltransferase family. Homotetramer; a dimer of dimers.

It functions in the pathway protein modification; protein glycosylation. Functionally, required for polymorphic O-glycosylation of the serine-rich repeat protein in this bacteria. Catalyzes the second step in glycosylation by transferring glucose from UDP-glucose to the terminal GlcNAc moiety of the 3-O-(N-acetyl-alpha-D-glucosaminyl)-L-seryl-[protein] resulting from the first glycosylation step. Part of the accessory SecA2/SecY2 system specifically required to export GspB, a serine-rich repeat cell wall protein encoded upstream in the same operon. The polypeptide is Glucosyltransferase 3 (Streptococcus gordonii).